The chain runs to 697 residues: Disintegrin and metalloproteinase domain-containing protein 26A (697 aa).

An N-terminal signal peptide occupies residues 1 to 22 (MFLKFCLWTMFFFSAWSPIGHA). A propeptide spanning residues 23-187 (KYSSLLEVVT…NAPTLLQIPY (165 aa)) is cleaved from the precursor. Asn127 carries an N-linked (GlcNAc...) asparagine glycan. A Cysteine switch motif is present at residues 159–166 (MRCGLSEE). Cys161 lines the Zn(2+) pocket. The Extracellular segment spans residues 188-671 (ENWWTHHRFI…PPLPLSHSKW (484 aa)). In terms of domain architecture, Peptidase M12B spans 195 to 385 (RFIEYFVVLD…TKRSCLYDIP (191 aa)). Asn214 is a glycosylation site (N-linked (GlcNAc...) asparagine). Intrachain disulfides connect Cys305-Cys380, Cys344-Cys366, and Cys346-Cys351. Zn(2+) is bound at residue His329. Glu330 is an active-site residue. Residues His333 and His339 each coordinate Zn(2+). N-linked (GlcNAc...) asparagine glycosylation is found at Asn365, Asn391, Asn464, Asn506, Asn531, and Asn573. A Disintegrin domain is found at 392-478 (LTVCGNKVVE…ECPGDVYKAD (87 aa)). Cys450 and Cys470 are joined by a disulfide. Residues 616–649 (LVSNCSPQLYHMQGICNNKQHCHCGVTWKPPDCQ) enclose the EGF-like domain. 2 disulfides stabilise this stretch: Cys620–Cys631 and Cys639–Cys648. The helical transmembrane segment at 672–692 (IVYILIVLDVCIVIIIYLFSF) threads the bilayer. Topologically, residues 693-697 (YKLSK) are cytoplasmic.

Requires Zn(2+) as cofactor. Expressed in sperm (at protein level). Expressed specifically in testis.

The protein resides in the membrane. Functionally, sperm surface membrane protein that may be involved in spermatogenesis and fertilization. The sequence is that of Disintegrin and metalloproteinase domain-containing protein 26A from Mus musculus (Mouse).